Here is a 197-residue protein sequence, read N- to C-terminus: Peptidoglycan-recognition protein 1 (197 aa).

A signal peptide spans 1 to 23 (MKLATITFFLLTEIFFYISYAEA). 2 disulfide bridges follow: Cys31/Cys154 and Cys68/Cys74. Residues 53-180 (KPLERVVIHH…RNVKATKSPG (128 aa)) form the N-acetylmuramoyl-L-alanine amidase domain.

It belongs to the N-acetylmuramoyl-L-alanine amidase 2 family. As to expression, localizes to plasma (at protein level).

Its subcellular location is the secreted. Peptidoglycan-recognition protein probably involved in innate immunity by binding to peptidoglycans (PGN) of bacteria and activating the prophenoloxidase (proPO) cascade immune response. Binds to 1,3-beta-D-glucan and PGN. The polypeptide is Peptidoglycan-recognition protein 1 (PGRP-1) (Holotrichia diomphalia (Korean black chafer)).